A 655-amino-acid polypeptide reads, in one-letter code: UvrABC system protein B (655 aa).

The 157-residue stretch at 25-181 (DGINKGEKEQ…IRKLVFMQYE (157 aa)) folds into the Helicase ATP-binding domain. 38–45 (GVTGSGKT) contacts ATP. The Beta-hairpin signature appears at 91 to 114 (YYDYYQPEAYVPRTDTFIDKESSV). Residues 428–590 (QVEDLLGEVK…IVPKTTKRAL (163 aa)) form the Helicase C-terminal domain. One can recognise a UVR domain in the interval 615-650 (RLLISDLENDMKEAAAKLDFERAASLRDQIATLKGL).

Belongs to the UvrB family. In terms of assembly, forms a heterotetramer with UvrA during the search for lesions. Interacts with UvrC in an incision complex.

It localises to the cytoplasm. In terms of biological role, the UvrABC repair system catalyzes the recognition and processing of DNA lesions. A damage recognition complex composed of 2 UvrA and 2 UvrB subunits scans DNA for abnormalities. Upon binding of the UvrA(2)B(2) complex to a putative damaged site, the DNA wraps around one UvrB monomer. DNA wrap is dependent on ATP binding by UvrB and probably causes local melting of the DNA helix, facilitating insertion of UvrB beta-hairpin between the DNA strands. Then UvrB probes one DNA strand for the presence of a lesion. If a lesion is found the UvrA subunits dissociate and the UvrB-DNA preincision complex is formed. This complex is subsequently bound by UvrC and the second UvrB is released. If no lesion is found, the DNA wraps around the other UvrB subunit that will check the other stand for damage. In Methanobrevibacter smithii (strain ATCC 35061 / DSM 861 / OCM 144 / PS), this protein is UvrABC system protein B.